Reading from the N-terminus, the 178-residue chain is Protein 105R (178 aa).

The first 18 residues, 1 to 18 (MYFLFFFLLFLFPVGVKG), serve as a signal peptide directing secretion.

The protein is Protein 105R of Pantherophis guttatus (Corn snake).